Consider the following 250-residue polypeptide: 3-deoxy-manno-octulosonate cytidylyltransferase (250 aa).

It belongs to the KdsB family.

The protein resides in the cytoplasm. The enzyme catalyses 3-deoxy-alpha-D-manno-oct-2-ulosonate + CTP = CMP-3-deoxy-beta-D-manno-octulosonate + diphosphate. The protein operates within nucleotide-sugar biosynthesis; CMP-3-deoxy-D-manno-octulosonate biosynthesis; CMP-3-deoxy-D-manno-octulosonate from 3-deoxy-D-manno-octulosonate and CTP: step 1/1. Its pathway is bacterial outer membrane biogenesis; lipopolysaccharide biosynthesis. Functionally, activates KDO (a required 8-carbon sugar) for incorporation into bacterial lipopolysaccharide in Gram-negative bacteria. The chain is 3-deoxy-manno-octulosonate cytidylyltransferase from Rhizobium meliloti (strain 1021) (Ensifer meliloti).